Here is a 371-residue protein sequence, read N- to C-terminus: Histidinol-phosphate aminotransferase (371 aa).

An N6-(pyridoxal phosphate)lysine modification is found at lysine 227.

This sequence belongs to the class-II pyridoxal-phosphate-dependent aminotransferase family. Histidinol-phosphate aminotransferase subfamily. Homodimer. Pyridoxal 5'-phosphate is required as a cofactor.

The enzyme catalyses L-histidinol phosphate + 2-oxoglutarate = 3-(imidazol-4-yl)-2-oxopropyl phosphate + L-glutamate. The protein operates within amino-acid biosynthesis; L-histidine biosynthesis; L-histidine from 5-phospho-alpha-D-ribose 1-diphosphate: step 7/9. The polypeptide is Histidinol-phosphate aminotransferase (Sphingopyxis alaskensis (strain DSM 13593 / LMG 18877 / RB2256) (Sphingomonas alaskensis)).